The sequence spans 337 residues: Glyceraldehyde-3-phosphate dehydrogenase (337 aa).

Residues 13 to 14, Asp-35, and Arg-80 each bind NAD(+); that span reads RI. Residues 151–153, Thr-182, 211–212, and Arg-234 each bind D-glyceraldehyde 3-phosphate; these read SCT and TG. Catalysis depends on Cys-152, which acts as the Nucleophile. Asn-316 is a binding site for NAD(+).

The protein belongs to the glyceraldehyde-3-phosphate dehydrogenase family. Homotetramer.

Its subcellular location is the cytoplasm. It carries out the reaction D-glyceraldehyde 3-phosphate + phosphate + NAD(+) = (2R)-3-phospho-glyceroyl phosphate + NADH + H(+). The protein operates within carbohydrate degradation; glycolysis; pyruvate from D-glyceraldehyde 3-phosphate: step 1/5. This Monascus purpureus (Red mold) protein is Glyceraldehyde-3-phosphate dehydrogenase (GPD1).